We begin with the raw amino-acid sequence, 529 residues long: MNAHELWQRYQTYLLFDADTGLILDVSRMAFSDDFFASMEPAMQRAFDAMERLEAGEIANPDENRMVGHYWLRSPELAPDPAIAAAIRETVDRVTAFAADVHNGVVTAPRARLFRNVLVIGIGGSALGPQFVADALGGHGDRMRPFFFDNTDPDGMDRVLETLGADGLAETLAIVISKSGGTKETRNGMLEAEAAYRRAGLDFSRHAVAVTGAGSELDRTAEAGGWLCRFPMWDWVGGRTSETSAVGLLPAALQGIPIRDFLDGARTCDTLTRRRETLRNPAALLALMWHHATRGSGSRDMVVLPYKDRLLLFSRYLQQLIMESIGKELDLDGTVVNQGLTVYGNKGSTDQHAYVQQLREGTNNFFVAFIEVLKDREGASLAVEPGFTSGDYLSGFLQGTRTALSEKGRESLTITIPAITPRTVGVLVALFERAVGLYASLVNINAYHQPGVEAGKKAAGGVLALTGEALAFLRREGGTLSATEIAAALGRPEEAETIFRSLLHAAANPDHGVVMEAASPLTRSRFSAR.

E323 functions as the Proton donor in the catalytic mechanism. Residues H352 and K456 contribute to the active site.

It belongs to the GPI family.

Its subcellular location is the cytoplasm. It carries out the reaction alpha-D-glucose 6-phosphate = beta-D-fructose 6-phosphate. It functions in the pathway carbohydrate biosynthesis; gluconeogenesis. Its pathway is carbohydrate degradation; glycolysis; D-glyceraldehyde 3-phosphate and glycerone phosphate from D-glucose: step 2/4. Catalyzes the reversible isomerization of glucose-6-phosphate to fructose-6-phosphate. This chain is Glucose-6-phosphate isomerase, found in Geobacter sulfurreducens (strain ATCC 51573 / DSM 12127 / PCA).